The primary structure comprises 509 residues: Maturase K (509 aa).

The protein belongs to the intron maturase 2 family. MatK subfamily.

Its subcellular location is the plastid. It is found in the chloroplast. Functionally, usually encoded in the trnK tRNA gene intron. Probably assists in splicing its own and other chloroplast group II introns. In Clematis florida (Asian virgin's bower), this protein is Maturase K.